The sequence spans 277 residues: Large ribosomal subunit protein mL46 (277 aa).

Lysine 228 is modified (N6-acetyllysine).

This sequence belongs to the mitochondrion-specific ribosomal protein mL46 family. Component of the mitochondrial ribosome large subunit (39S) which comprises a 16S rRNA and about 50 distinct proteins.

Its subcellular location is the mitochondrion. The chain is Large ribosomal subunit protein mL46 (MRPL46) from Bos taurus (Bovine).